A 166-amino-acid polypeptide reads, in one-letter code: Large ribosomal subunit protein uL10 (166 aa).

It belongs to the universal ribosomal protein uL10 family. Part of the ribosomal stalk of the 50S ribosomal subunit. The N-terminus interacts with L11 and the large rRNA to form the base of the stalk. The C-terminus forms an elongated spine to which L12 dimers bind in a sequential fashion forming a multimeric L10(L12)X complex.

Forms part of the ribosomal stalk, playing a central role in the interaction of the ribosome with GTP-bound translation factors. In Bacillus cereus (strain G9842), this protein is Large ribosomal subunit protein uL10.